A 570-amino-acid chain; its full sequence is MRASQIFIPTLKETPAEAELVSHQLLLRGGFIRRLASGLYTWMPLGLRVLRKVERVVREEMDRSGAQELLMPVVQPAELWQESGRWEQYGPELLRLRDRHDREFCLGPTHEEVISDLARREIHSYRQLPVNFYQIQTKFRDEIRPRFGLMRGREFIMKDAYSFHMDHSSLEITYQAMYEAYQRVFTRLGLSFRAVEADNGAIGGKRSHEFHVLADSGEDAIVSCHHCDYAANMEKAASRPDLAETEIPLAAERVRTPGIRTVAEQAEHLGIPTAKIVKTVLVVADGKTVMLLLRGDDELNLVKAGHALNAQDVQMARPEEAISATGAPLGFIGPKEPLLSIPILADHRALGVANFSTGANAADLHWINLNWDRDLPRPAAADLRNVRAGDACPHCAEGTLSIRRGIEVGHVFQLGERYSESMGITVLDETGRDATVTMGCYGIGVSRVVAAAVEQHFDDRGIIWPVALAPFEVGIVAINARKSPDVAAAAQALHDRLEAEGYSVLLDDRDERPGVQFATMDLVGLPHRIVVSDTVLAQGVWEYRARRTTENVLLDETQLMERLRKEHARG.

This sequence belongs to the class-II aminoacyl-tRNA synthetase family. ProS type 1 subfamily. Homodimer.

The protein resides in the cytoplasm. It catalyses the reaction tRNA(Pro) + L-proline + ATP = L-prolyl-tRNA(Pro) + AMP + diphosphate. Functionally, catalyzes the attachment of proline to tRNA(Pro) in a two-step reaction: proline is first activated by ATP to form Pro-AMP and then transferred to the acceptor end of tRNA(Pro). As ProRS can inadvertently accommodate and process non-cognate amino acids such as alanine and cysteine, to avoid such errors it has two additional distinct editing activities against alanine. One activity is designated as 'pretransfer' editing and involves the tRNA(Pro)-independent hydrolysis of activated Ala-AMP. The other activity is designated 'posttransfer' editing and involves deacylation of mischarged Ala-tRNA(Pro). The misacylated Cys-tRNA(Pro) is not edited by ProRS. This chain is Proline--tRNA ligase, found in Acidithiobacillus ferrooxidans (strain ATCC 23270 / DSM 14882 / CIP 104768 / NCIMB 8455) (Ferrobacillus ferrooxidans (strain ATCC 23270)).